Consider the following 374-residue polypeptide: tRNA-specific 2-thiouridylase MnmA (374 aa).

Residues 12–19 (GMSGGVDS) and methionine 38 contribute to the ATP site. The segment at 98–100 (NPD) is interaction with target base in tRNA. The active-site Nucleophile is the cysteine 103. A disulfide bridge connects residues cysteine 103 and cysteine 200. Position 127 (glycine 127) interacts with ATP. Positions 150–152 (KDQ) are interaction with tRNA. Cysteine 200 functions as the Cysteine persulfide intermediate in the catalytic mechanism. An interaction with tRNA region spans residues 311-312 (RY).

This sequence belongs to the MnmA/TRMU family.

The protein resides in the cytoplasm. It carries out the reaction S-sulfanyl-L-cysteinyl-[protein] + uridine(34) in tRNA + AH2 + ATP = 2-thiouridine(34) in tRNA + L-cysteinyl-[protein] + A + AMP + diphosphate + H(+). Functionally, catalyzes the 2-thiolation of uridine at the wobble position (U34) of tRNA, leading to the formation of s(2)U34. This is tRNA-specific 2-thiouridylase MnmA from Enterococcus faecalis (strain ATCC 700802 / V583).